We begin with the raw amino-acid sequence, 605 residues long: Kelch-like protein 41b (605 aa).

The region spanning 32–102 (VDCTLKIGDR…YSAEIDLVDD (71 aa)) is the BTB domain. In terms of domain architecture, BACK spans 136-238 (CLAVFRLGLV…PEKYFREKVE (103 aa)). 5 Kelch repeats span residues 345–397 (QLFI…ESEN), 398–446 (LLFA…SHNN), 447–494 (LVYC…VHKG), 496–541 (IIVT…SSGG), and 543–598 (LFSI…MRLN).

Its subcellular location is the cytoplasm. The protein localises to the cytoskeleton. The protein resides in the sarcoplasmic reticulum membrane. It localises to the endoplasmic reticulum membrane. Functionally, involved in skeletal muscle development and maintenance. This Danio rerio (Zebrafish) protein is Kelch-like protein 41b.